Consider the following 369-residue polypeptide: Histidinol-phosphate aminotransferase (369 aa).

The tract at residues 1-39 is disordered; that stretch reads MSFGIDDLPVRDELRGKSPYGAPQLDVPVRLNTNENPYP. K230 bears the N6-(pyridoxal phosphate)lysine mark.

This sequence belongs to the class-II pyridoxal-phosphate-dependent aminotransferase family. Histidinol-phosphate aminotransferase subfamily. As to quaternary structure, homodimer. The cofactor is pyridoxal 5'-phosphate.

It carries out the reaction L-histidinol phosphate + 2-oxoglutarate = 3-(imidazol-4-yl)-2-oxopropyl phosphate + L-glutamate. The protein operates within amino-acid biosynthesis; L-histidine biosynthesis; L-histidine from 5-phospho-alpha-D-ribose 1-diphosphate: step 7/9. The chain is Histidinol-phosphate aminotransferase (hisC) from Streptomyces avermitilis (strain ATCC 31267 / DSM 46492 / JCM 5070 / NBRC 14893 / NCIMB 12804 / NRRL 8165 / MA-4680).